We begin with the raw amino-acid sequence, 467 residues long: Putative ankyrin repeat protein R911 (467 aa).

ANK repeat units follow at residues 38 to 70 (IKTDIIEYVMENDLIDILKYLSLLKKLGHPIIV), 79 to 108 (TLNKYLIKNCGENQLEIVKFLVSLGADIRA), 109 to 138 (GNDYAVGLSSQNGHLEVVKYLVNQGSDIRA), 140 to 168 (NDYAVRWASGNGHLEVVKYLVSQGANIRA), 170 to 198 (NDHAIGLASYYGYLEVVKYLVSQGADIRS), 199 to 228 (DNDYAVRMASRNGHIEVVEYLVSQGANIRS), 229 to 258 (DNDYAVRLASQNGHLEVVKYLVSQGADIKS), 260 to 288 (NDYAVRLASQNGHLEVVEYLVTQGTNIRV), 289 to 318 (NNNYAVEWASKNGNLEVVKYLISQGADIIA), 320 to 348 (NNFAVRWASRNGHLEVVKYLVSLGADIKS), 350 to 378 (NDYAVRWASGNGHLEVVKYLVSQGSDIRV), 379 to 408 (ENDYAVRWASRNGHFDVIKYLVSQGADIRS), 410 to 438 (NDYAVKWASENGHLEVVKFLVSLGADIKA), and 440 to 467 (DDYAVRWASEKGHLEVVEYLVSQGAVLS).

This chain is Putative ankyrin repeat protein R911, found in Acanthamoeba polyphaga mimivirus (APMV).